The following is a 160-amino-acid chain: 3-dehydroquinate dehydratase (160 aa).

The active-site Proton acceptor is tyrosine 22. Substrate-binding residues include asparagine 73, histidine 79, and aspartate 86. Histidine 99 functions as the Proton donor in the catalytic mechanism. Substrate is bound by residues 100–101 and arginine 110; that span reads IS.

This sequence belongs to the type-II 3-dehydroquinase family. As to quaternary structure, homododecamer.

It carries out the reaction 3-dehydroquinate = 3-dehydroshikimate + H2O. It participates in metabolic intermediate biosynthesis; chorismate biosynthesis; chorismate from D-erythrose 4-phosphate and phosphoenolpyruvate: step 3/7. Functionally, catalyzes a trans-dehydration via an enolate intermediate. This chain is 3-dehydroquinate dehydratase, found in Sulfurimonas denitrificans (strain ATCC 33889 / DSM 1251) (Thiomicrospira denitrificans (strain ATCC 33889 / DSM 1251)).